The primary structure comprises 981 residues: Helicase-like transcription factor CHR28 (981 aa).

2 disordered regions span residues 1–66 and 112–194; these read MDSA…LDSR and KRTH…RNSE. Over residues 46–65 the composition is skewed to polar residues; sequence SGSSSGANGHTKTGLTNLDS. The segment covering 119-128 has biased composition (pro residues); that stretch reads FSRPPFPPRP. The segment covering 166–176 has biased composition (polar residues); that stretch reads HGTSASPSHFN. Residues 181–194 show a composition bias toward basic and acidic residues; that stretch reads PMHRNGIGEERNSE. Positions 241–526 constitute a Helicase ATP-binding domain; sequence ETNSLHCMGG…YSYFRFLKYD (286 aa). Residue 254–261 coordinates ATP; it reads DDQGLGKT. 2 disordered regions span residues 293–337 and 439–462; these read DADD…RKFN and VVGT…SDPD. Over residues 439–451 the composition is skewed to basic residues; it reads VVGTTKKSKKKKG. The RING-type; degenerate zinc finger occupies 679 to 718; it reads CCVCHDPPEDPVVTLCGHIFCYQCVSDYITGDEDTCPAPR. A compositionally biased stretch (polar residues) spans 779–798; sequence NQGTSNSTQNGQMASSSQQP. Residues 779-808 form a disordered region; sequence NQGTSNSTQNGQMASSSQQPNDDDDDDDDD. The span at 799-808 shows a compositional bias: acidic residues; sequence NDDDDDDDDD. A Helicase C-terminal domain is found at 804 to 976; the sequence is DDDDDVTIVE…ATRLTVDDLK (173 aa).

The protein belongs to the SNF2/RAD54 helicase family. RAD16 subfamily. Interacts with SUVR2.

It localises to the nucleus. Its function is as follows. Probable helicase-like transcription factor involved in transcriptional gene silencing. Associates with SUVR2 and contributes to transcriptional gene silencing at RNA-directed DNA methylation (RdDM) target loci but also at RdDM-independent target loci. May be involved in nucleosome positioning to form ordered nucleosome arrays on chromatin. Associates with SUVR2 and functions redundantly with FRG1. Required for the efficient methylation of a broad range of RdDM target loci. The chain is Helicase-like transcription factor CHR28 from Arabidopsis thaliana (Mouse-ear cress).